A 669-amino-acid chain; its full sequence is UvrABC system protein B (669 aa).

In terms of domain architecture, Helicase ATP-binding spans 26–414 (TNFHAGIAKQ…AGEVIELLVR (389 aa)). Residue 39-46 (GVTGSGKT) participates in ATP binding. Residues 92-115 (YYDYYQPEAYVPASDTFIEKDSSI) carry the Beta-hairpin motif. The Helicase C-terminal domain occupies 435–597 (LISQINVCIK…SVVRPISDIL (163 aa)). The UVR domain occupies 631–666 (AAQMKVLEQQMYQHARDLEFEDAARIRDQIQRLREA).

Belongs to the UvrB family. As to quaternary structure, forms a heterotetramer with UvrA during the search for lesions. Interacts with UvrC in an incision complex.

It localises to the cytoplasm. Functionally, the UvrABC repair system catalyzes the recognition and processing of DNA lesions. A damage recognition complex composed of 2 UvrA and 2 UvrB subunits scans DNA for abnormalities. Upon binding of the UvrA(2)B(2) complex to a putative damaged site, the DNA wraps around one UvrB monomer. DNA wrap is dependent on ATP binding by UvrB and probably causes local melting of the DNA helix, facilitating insertion of UvrB beta-hairpin between the DNA strands. Then UvrB probes one DNA strand for the presence of a lesion. If a lesion is found the UvrA subunits dissociate and the UvrB-DNA preincision complex is formed. This complex is subsequently bound by UvrC and the second UvrB is released. If no lesion is found, the DNA wraps around the other UvrB subunit that will check the other stand for damage. The protein is UvrABC system protein B of Xylella fastidiosa (strain 9a5c).